The sequence spans 952 residues: Respiratory burst oxidase homolog protein E (952 aa).

Over 1-392 (MKLSPLSFST…QCLILDNWQR (392 aa)) the chain is Cytoplasmic. EF-hand-like regions lie at residues 211–219 (SKNGLLARD) and 245–256 (RRQKLEKITKDE). 2 consecutive EF-hand domains span residues 268–303 (SFDA…SASA) and 312–347 (QAEE…RDAY). Aspartate 281, asparagine 283, aspartate 285, lysine 287, and glutamate 292 together coordinate Ca(2+). Residues 393 to 413 (SWVLLVWVMLMAILFVWKFLE) traverse the membrane as a helical segment. At 414-475 (YREKAAFKVM…PFDDNINFHK (62 aa)) the chain is on the extracellular side. Residues 431–587 (KGAAETLKLN…LLVVVYIMLI (157 aa)) form the Ferric oxidoreductase domain. Residues 476–496 (IIACAIAIGILVHAGTHLACD) form a helical membrane-spanning segment. The Cytoplasmic segment spans residues 497-531 (FPRIINSSPEQFVLIASAFNGTKPTFKDLMTGAEG). The helical transmembrane segment at 532-552 (ITGISMVILTTIAFTLASTHF) threads the bilayer. Over 553–574 (RRNRVRLPAPLDRLTGFNAFWY) the chain is Extracellular. The chain crosses the membrane as a helical span at residues 575–595 (THHLLVVVYIMLIVHGTFLFF). The Cytoplasmic portion of the chain corresponds to 596–603 (ADKWYQKT). Residues 604-621 (TWMYISVPLVLYVAERSL) traverse the membrane as a helical segment. Residues 622–750 (RACRSKHYSV…PYGAPAQDYR (129 aa)) are Extracellular-facing. The 123-residue stretch at 626-748 (SKHYSVKILK…DGPYGAPAQD (123 aa)) folds into the FAD-binding FR-type domain. Residues 751–771 (SYDVLLLIGLGIGATPFISIL) traverse the membrane as a helical segment. Residues 772–952 (KDLLNNSRDE…TRFEFHKEHF (181 aa)) are Cytoplasmic-facing.

This sequence belongs to the RBOH (TC 5.B.1.3) family. As to quaternary structure, monomer and homodimer. As to expression, expressed in roots, inflorescences, leaves and stems.

The protein localises to the membrane. In terms of biological role, calcium-dependent NADPH oxidase that generates superoxide. The protein is Respiratory burst oxidase homolog protein E (RBOHE) of Arabidopsis thaliana (Mouse-ear cress).